Consider the following 562-residue polypeptide: Protein wntless (562 aa).

Topologically, residues 1–13 (MSGTILENLSGRK) are cytoplasmic. A helical membrane pass occupies residues 14–34 (LSILVGSLLLCQVLCFLLGGL). Topologically, residues 35-239 (YAPVPAGHTN…AIHQNGGFTH (205 aa)) are lumenal. Asn58 carries N-linked (GlcNAc...) asparagine glycosylation. The helical transmembrane segment at 240-260 (VWLMLKTLLFPFVVGIMVWFW) threads the bilayer. The Cytoplasmic segment spans residues 261–270 (RRVHLLQRSP). Residues 271–291 (ALLEYMLLYLGGALTFLNLPL) traverse the membrane as a helical segment. At 292-311 (EYLSLTIEMPYMLLLSDIRQ) the chain is on the lumenal side. Residues 312–332 (GIFYAMLLSFWLVFAGEHMLI) form a helical membrane-spanning segment. Over 333-344 (QDSHNKSTIRSR) the chain is Cytoplasmic. The helical transmembrane segment at 345 to 365 (YWKHLSAVVVGCISLFVFDIS) threads the bilayer. Over 366–386 (ERGVQLRNPFYSIWTTPLGAK) the chain is Lumenal. Residues 387–407 (VAMSFILLAGVSAAVYFLFLC) traverse the membrane as a helical segment. Residues 408-441 (YMISKVFKNIGDKRTSLPSMSQARRLHYEGLIYR) lie on the Cytoplasmic side of the membrane. The helical transmembrane segment at 442–462 (FKFLMLATLLCAALTVTGFIM) threads the bilayer. The Lumenal segment spans residues 463–482 (GQMAEGQWKWNDDVEIQLTS). A helical transmembrane segment spans residues 483–503 (AFLTGVYGMWNIYIFALLILY). Residues 504–562 (APSHKQWPTMHHSDETTQSNENIVASAASEEIEFSNLPSDSNPSEISSLTSFTRKVAFE) are Cytoplasmic-facing. The disordered stretch occupies residues 538-562 (SNLPSDSNPSEISSLTSFTRKVAFE). Positions 539-556 (NLPSDSNPSEISSLTSFT) are enriched in polar residues.

Belongs to the wntless family. In terms of assembly, interacts with wg; in the Golgi. Interacts with Vps35, a component of the retromer complex; wls stability is regulated by Vps35.

It localises to the presynaptic cell membrane. It is found in the postsynaptic cell membrane. Its subcellular location is the cell membrane. The protein localises to the endoplasmic reticulum membrane. The protein resides in the endosome membrane. It localises to the golgi apparatus membrane. In terms of biological role, a segment polarity gene required for wingless (wg)-dependent patterning processes, acting in both wg-sending cells and wg-target cells. In non-neuronal cells wls directs wg secretion. The wls traffic loop encompasses the Golgi, the cell surface, an endocytic compartment and a retrograde route leading back to the Golgi, and involves clathrin-mediated endocytosis and the retromer complex (a conserved protein complex consisting of Vps35 and Vps26). In neuronal cells (the larval motorneuron NMJ), the wg signal moves across the synapse via the release of wls-containing exosome-like vesicles. Postsynaptic wls is required for the trafficking of fz2 through the fz2-interacting protein Grip. This is Protein wntless from Drosophila persimilis (Fruit fly).